Reading from the N-terminus, the 401-residue chain is Nicotinamide/nicotinic acid mononucleotide adenylyltransferase 1 (401 aa).

Disordered stretches follow at residues 1–30 (MDPT…KIPK) and 48–123 (APFN…RGVQ). Positions 52–69 (IKRKKKHPKHHHHHHHSR) are enriched in basic residues. Residues serine 91, serine 95, serine 96, and serine 111 each carry the phosphoserine modification. Residues serine 173 and phenylalanine 174 each coordinate NAD(+). Histidine 181 is an ATP binding site. Residues threonine 253, glycine 288, aspartate 290, tryptophan 301, arginine 320, and asparagine 351 each coordinate NAD(+). 356–359 (TKVR) serves as a coordination point for ATP.

The protein belongs to the eukaryotic NMN adenylyltransferase family. Homotetramer. The cofactor is Ni(2+).

The protein localises to the cytoplasm. Its subcellular location is the nucleus. It carries out the reaction beta-nicotinamide D-ribonucleotide + ATP + H(+) = diphosphate + NAD(+). The enzyme catalyses nicotinate beta-D-ribonucleotide + ATP + H(+) = deamido-NAD(+) + diphosphate. The protein operates within cofactor biosynthesis; NAD(+) biosynthesis; deamido-NAD(+) from nicotinate D-ribonucleotide: step 1/1. Its pathway is cofactor biosynthesis; NAD(+) biosynthesis; NAD(+) from nicotinamide D-ribonucleotide: step 1/1. Catalyzes the formation of NAD(+) from nicotinamide mononucleotide (NMN) and ATP. Can also use the deamidated form; nicotinic acid mononucleotide (NaMN) as substrate to form deamido-NAD(+) (NaAD). Key enzyme in both de novo and salvage pathways for NAD(+) biosynthesis. Predominantly acts in the salvage pathways via NMN. The chain is Nicotinamide/nicotinic acid mononucleotide adenylyltransferase 1 from Saccharomyces cerevisiae (strain ATCC 204508 / S288c) (Baker's yeast).